Here is a 314-residue protein sequence, read N- to C-terminus: Testis-specific Y-encoded protein 9 (314 aa).

The protein belongs to the nucleosome assembly protein (NAP) family.

The protein resides in the cytoplasm. It localises to the nucleus. May be involved in sperm differentiation and proliferation. This chain is Testis-specific Y-encoded protein 9, found in Homo sapiens (Human).